The chain runs to 400 residues: Lysophospholipid transporter LplT (400 aa).

Transmembrane regions (helical) follow at residues 19–39 (VIVA…ATLA), 53–73 (VLQM…GQMA), 91–111 (AGAA…LVGI), 139–159 (LMEA…GVLA), 164–184 (IAAL…NLFI), 195–213 (SWRL…VVLW), 227–247 (LFWG…PVAL), 257–277 (YLNA…AKLV), 281–301 (TVSR…IFSL), 304–324 (ALLP…FFVV), 352–372 (NSAM…GVPA), and 373–393 (VAIG…LWIW).

The protein belongs to the major facilitator superfamily. LplT (TC 2.A.1.42) family.

It is found in the cell inner membrane. Catalyzes the facilitated diffusion of 2-acyl-glycero-3-phosphoethanolamine (2-acyl-GPE) into the cell. This Salmonella enteritidis PT4 (strain P125109) protein is Lysophospholipid transporter LplT.